The chain runs to 358 residues: CCAAT/enhancer-binding protein alpha (358 aa).

The tract at residues 1–55 is disordered; it reads MESADFYEAEPRPPMSSHLQSPPHAPSNAAFGFPRGAGPAPPPAPPAAPEPLGGI. The required to repress E2F1:TFDP1-mediated transcription, to inhibit cell cycle and to induce adipocyte differentiation stretch occupies residues 1–70; the sequence is MESADFYEAE…SIDISAYIDP (70 aa). The segment covering 29-38 has biased composition (low complexity); sequence AAFGFPRGAG. A compositionally biased stretch (pro residues) spans 39–49; the sequence is PAPPPAPPAAP. The interval 54 to 72 is required for interaction with TRIB1; it reads GICEHETSIDISAYIDPAA. Residues 126 to 200 are required to induce adipocyte differentiation; it reads PPGYGCAAAG…HASPAHLAAP (75 aa). Residue Lys-159 is modified to N6-acetyllysine; alternate. Residue Lys-159 forms a Glycyl lysine isopeptide (Lys-Gly) (interchain with G-Cter in SUMO); alternate linkage. Lys-159 is covalently cross-linked (Glycyl lysine isopeptide (Lys-Gly) (interchain with G-Cter in SUMO2); alternate). Disordered regions lie at residues 176 to 195 and 213 to 310; these read LFPY…ASPA and TMHL…NVET. Residues 179-191 show a composition bias toward pro residues; sequence YQPPPPPPPPHPH. The segment at 180–194 is required to functionally cooperate with SREBF1 in promoter activation; the sequence is QPPPPPPPPHPHASP. At Ser-193 the chain carries Phosphoserine. The span at 220 to 234 shows a compositional bias: pro residues; sequence HPTPPPTPVPSPHPA. Phosphothreonine; by GSK3 occurs at positions 222 and 226. Position 230 is a phosphoserine; by GSK3 (Ser-230). An interaction with FOXO1 region spans residues 240 to 358; it reads AGLPGPGGSL…SLVKAMGNCA (119 aa). Gly residues predominate over residues 261–271; it reads TGGGGGGGAGA. A compositionally biased stretch (basic and acidic residues) spans 276–292; sequence KSVDKNSNEYRVRRERN. In terms of domain architecture, bZIP spans 282-345; that stretch reads SNEYRVRRER…DTLRGIFRQL (64 aa). A DNA-binding region spans residues 285 to 300; that stretch reads YRVRRERNNIAVRKSR. Residues 286 to 313 are basic motif; it reads RVRRERNNIAVRKSRDKAKQRNVETQQK. A leucine-zipper region spans residues 317–345; the sequence is LTSDNDRLRKRVEQLSRELDTLRGIFRQL.

The protein belongs to the bZIP family. C/EBP subfamily. As to quaternary structure, binds DNA as a homodimer and as a heterodimer. Can form stable heterodimers with CEBPB, CEBPD, CEBPE and CEBPG. Can form stable homodimers (also isoform 2 and isoform 3 dimers) and heterodimers with CEBPB (with isoform 2 and isoform 3) and CEBPG. Interacts with PRDM16. Interacts with UBN1. Interacts with ZNF638; this interaction increases transcriptional activation. Interacts with the complex TFDP2:E2F1; the interaction prevents CEBPA binding to target gene promoters and represses its transcriptional activity. Interacts with RB1. Interacts (when phosphorylated at Ser-193) with CDK2, CDK4, E2F4 and SMARCA2. Interacts with SREBPF1. Interacts with FOXO1 (via the Fork-head domain); the interaction increases when FOXO1 is deacetylated. Interacts with SIX1. Interacts (via recognition sequence) with TRIB1. Interacts with TAF1A and UBTF. In terms of assembly, interacts with NPM1. Post-translationally, sumoylated, sumoylation blocks the inhibitory effect on cell proliferation by disrupting the interaction with SMARCA2. Phosphorylation at Ser-193 is required for interaction with CDK2, CDK4 and SWI/SNF complex leading to cell cycle inhibition. Dephosphorylated at Ser-193 by protein phosphatase 2A (PP2A) through PI3K/AKT signaling pathway regulation. Phosphorylation at Thr-222 and Thr-226 by GSK3 is constitutive in adipose tissue and lung. In liver, both Thr-222 and Thr-226 are phosphorylated only during feeding but not during fasting. Phosphorylation of the GSK3 consensus sites selectively decreases transactivation activity on IRE-controlled promoters. In terms of processing, ubiquitinated by COP1 upon interaction with TRIB1. In terms of tissue distribution, isoform 2 and isoform 3 are expressed in liver (at protein level).

Its subcellular location is the nucleus. It localises to the nucleolus. In terms of biological role, transcription factor that coordinates proliferation arrest and the differentiation of myeloid progenitors, adipocytes, hepatocytes, and cells of the lung and the placenta. Binds directly to the consensus DNA sequence 5'-T[TG]NNGNAA[TG]-3' acting as an activator on distinct target genes. During early embryogenesis, plays essential and redundant functions with CEBPB. Essential for the transition from common myeloid progenitors (CMP) to granulocyte/monocyte progenitors (GMP). Critical for the proper development of the liver and the lung. Necessary for terminal adipocyte differentiation, is required for postnatal maintenance of systemic energy homeostasis and lipid storage. To regulate these different processes at the proper moment and tissue, interplays with other transcription factors and modulators. Down-regulates the expression of genes that maintain cells in an undifferentiated and proliferative state through E2F1 repression, which is critical for its ability to induce adipocyte and granulocyte terminal differentiation. Reciprocally E2F1 blocks adipocyte differentiation by binding to specific promoters and repressing CEBPA binding to its target gene promoters. Proliferation arrest also depends on a functional binding to SWI/SNF complex. In liver, regulates gluconeogenesis and lipogenesis through different mechanisms. To regulate gluconeogenesis, functionally cooperates with FOXO1 binding to IRE-controlled promoters and regulating the expression of target genes such as PCK1 or G6PC1. To modulate lipogenesis, interacts and transcriptionally synergizes with SREBF1 in promoter activation of specific lipogenic target genes such as ACAS2. In adipose tissue, seems to act as FOXO1 coactivator accessing to ADIPOQ promoter through FOXO1 binding sites. Functionally, can act as dominant-negative. Binds DNA and have transctivation activity, even if much less efficiently than isoform 2. Does not inhibit cell proliferation. Directly and specifically enhances ribosomal DNA transcription interacting with RNA polymerase I-specific cofactors and inducing histone acetylation. The chain is CCAAT/enhancer-binding protein alpha from Rattus norvegicus (Rat).